Reading from the N-terminus, the 223-residue chain is UPF0441 protein YgiB (223 aa).

The segment covering 178 to 195 (TVPKTAMAPKPATTTTVT) has biased composition (low complexity). The segment at 178–223 (TVPKTAMAPKPATTTTVTRGGFGESIAKQSTMQRSATGTSSRSMGG) is disordered. Over residues 204–223 (AKQSTMQRSATGTSSRSMGG) the composition is skewed to polar residues.

It belongs to the UPF0441 family.

The chain is UPF0441 protein YgiB from Shigella boydii serotype 4 (strain Sb227).